Here is a 99-residue protein sequence, read N- to C-terminus: MEIKITEVKENKLIGRKEIYFEIYHPGEPTPSRKDVKGKLVAMLDLNPETTVIQYIRSYFGSYKSKGYAKYYYDKERMLYIEPEYILIRDGIIEKKEGE.

This sequence belongs to the eukaryotic ribosomal protein eS24 family.

The chain is Small ribosomal subunit protein eS24 from Pyrococcus horikoshii (strain ATCC 700860 / DSM 12428 / JCM 9974 / NBRC 100139 / OT-3).